Here is a 302-residue protein sequence, read N- to C-terminus: Sulfate adenylyltransferase subunit 2 (302 aa).

This sequence belongs to the PAPS reductase family. CysD subfamily. Heterodimer composed of CysD, the smaller subunit, and CysN.

The enzyme catalyses sulfate + ATP + H(+) = adenosine 5'-phosphosulfate + diphosphate. It participates in sulfur metabolism; hydrogen sulfide biosynthesis; sulfite from sulfate: step 1/3. With CysN forms the ATP sulfurylase (ATPS) that catalyzes the adenylation of sulfate producing adenosine 5'-phosphosulfate (APS) and diphosphate, the first enzymatic step in sulfur assimilation pathway. APS synthesis involves the formation of a high-energy phosphoric-sulfuric acid anhydride bond driven by GTP hydrolysis by CysN coupled to ATP hydrolysis by CysD. The chain is Sulfate adenylyltransferase subunit 2 from Salmonella agona (strain SL483).